The sequence spans 522 residues: MSNRVIIFDTTLRDGEQALAASLSVKEKLQIAMALERLGVDVMEVGFPVSSPGDFESVQTIARTIKNSRVCALSRALEKDIDAAAQALSVAEQFRIHTFISTSTIHVESKLKRSFEQVLEMAVGAVKYARRFTDDVEFSCEDAGRTPIDNLCRMVEAAIHAGARTINIPDTVGYTVPSEFGGIIQTLFNRVPNIDQAIISVHCHDDLGMSVANSITAVQHGARQIECTMNGIGERAGNCSLEEIAMILATRKNLLGVETGINAKEIHRTSNLVSQLCNMPIQSNKAIVGANAFTHSSGIHQDGMLKAQNTYEIMTPESIGLNRNNLNMTSRSGRHVIKHRMEEMGYSEQNYNLDALYEQFLHLADKKGQVFDYDLEALAFMEAQAAEDNFYQLQQLVVQSDSTEGVATATVRIDVGGEIKTEAATGNGPVDAAYNAIARATDRRIDIISYKLSAKGEGQNALGQVDITAVYHEQNFHGVGLATDVVEASARALVHVMNLTCRADKVADYKQNMHKNRELGGV.

The Pyruvate carboxyltransferase domain occupies 5-267 (VIIFDTTLRD…ETGINAKEIH (263 aa)). 4 residues coordinate Mn(2+): Asp14, His202, His204, and Asn238. Residues 392–522 (QLQQLVVQSD…MHKNRELGGV (131 aa)) form a regulatory domain region.

It belongs to the alpha-IPM synthase/homocitrate synthase family. LeuA type 1 subfamily. As to quaternary structure, homodimer. Mn(2+) serves as cofactor.

The protein localises to the cytoplasm. The catalysed reaction is 3-methyl-2-oxobutanoate + acetyl-CoA + H2O = (2S)-2-isopropylmalate + CoA + H(+). It functions in the pathway amino-acid biosynthesis; L-leucine biosynthesis; L-leucine from 3-methyl-2-oxobutanoate: step 1/4. Functionally, catalyzes the condensation of the acetyl group of acetyl-CoA with 3-methyl-2-oxobutanoate (2-ketoisovalerate) to form 3-carboxy-3-hydroxy-4-methylpentanoate (2-isopropylmalate). The sequence is that of 2-isopropylmalate synthase from Shewanella sp. (strain MR-7).